The following is a 164-amino-acid chain: Lipoprotein signal peptidase (164 aa).

Helical transmembrane passes span 11–31, 41–61, 64–84, and 92–112; these read YWVL…AVLS, VIPS…FSFL, QGGW…AYLV, and FAAL…GNVI. Residues D122 and D140 contribute to the active site. The chain crosses the membrane as a helical span at residues 132–152; it reads FYPAFNIADSFICVGAVLAVL.

The protein belongs to the peptidase A8 family.

It localises to the cell inner membrane. The catalysed reaction is Release of signal peptides from bacterial membrane prolipoproteins. Hydrolyzes -Xaa-Yaa-Zaa-|-(S,diacylglyceryl)Cys-, in which Xaa is hydrophobic (preferably Leu), and Yaa (Ala or Ser) and Zaa (Gly or Ala) have small, neutral side chains.. Its pathway is protein modification; lipoprotein biosynthesis (signal peptide cleavage). Its function is as follows. This protein specifically catalyzes the removal of signal peptides from prolipoproteins. In Neisseria gonorrhoeae (strain ATCC 700825 / FA 1090), this protein is Lipoprotein signal peptidase.